The sequence spans 358 residues: MLATLWLVGLSLPMLWAQRLISCPYKNVCQYALLSGSDVILQCNYPKALWYFSSSLEDKLSLVNSKPDGRVLPGSDLQLSDPKPSQTGLYRCLDNHKARLVEYEIDFQNIALLHITHKDLGQEPMGNESMNLGGKVLVFTRWDPWQDCNRCQKPGERKRLGYCYVEEPQEKPMPCWLYLREEKVTNSRLRPELQLQACQVPCDTATETNQPYFVFDTYLLDKPNSNARLKCPLASIYRPVHWEADNSPLTWQDQLSGQTVSTIMDLHSGGQHLKVFQPATYRCFVEQELIAQFNPTERQSKAQNPWQPRIQPDKADSVLRRLKLMVLSISVLAVGGLLCKVVFRPVCGKKRSQVLLVK.

Residues 1–17 (MLATLWLVGLSLPMLWA) form the signal peptide. Topologically, residues 18–322 (QRLISCPYKN…DKADSVLRRL (305 aa)) are extracellular. Asn127 is a glycosylation site (N-linked (GlcNAc...) asparagine). Residues 323 to 343 (KLMVLSISVLAVGGLLCKVVF) form a helical membrane-spanning segment. Residues 344 to 358 (RPVCGKKRSQVLLVK) lie on the Cytoplasmic side of the membrane.

The protein belongs to the FAM187 family.

It is found in the membrane. The chain is Protein FAM187B (Fam187b) from Mus musculus (Mouse).